Consider the following 690-residue polypeptide: Elongation factor G (690 aa).

Residues 8–283 (SKCRNIGIMA…AVVDFLPAPN (276 aa)) enclose the tr-type G domain. Residues 17–24 (AHIDAGKT), 81–85 (DTPGH), and 135–138 (NKMD) contribute to the GTP site.

It belongs to the TRAFAC class translation factor GTPase superfamily. Classic translation factor GTPase family. EF-G/EF-2 subfamily.

The protein resides in the cytoplasm. Catalyzes the GTP-dependent ribosomal translocation step during translation elongation. During this step, the ribosome changes from the pre-translocational (PRE) to the post-translocational (POST) state as the newly formed A-site-bound peptidyl-tRNA and P-site-bound deacylated tRNA move to the P and E sites, respectively. Catalyzes the coordinated movement of the two tRNA molecules, the mRNA and conformational changes in the ribosome. This Ehrlichia canis (strain Jake) protein is Elongation factor G.